The sequence spans 72 residues: uncharacterized protein (72 aa).

The helical transmembrane segment at 23 to 45 (ITNLLITTILLCFFNATTYWKLF) threads the bilayer.

The protein localises to the membrane. This is an uncharacterized protein from Schizosaccharomyces pombe (strain 972 / ATCC 24843) (Fission yeast).